A 400-amino-acid polypeptide reads, in one-letter code: MSQQHTLPVTLPAALSQEPLKTVSPPPNTQQEHTKQPTPLPAPCQEVPSELPVEDPSKHKEKHTTPVKGVPEQEHELQQQQDSQEQELHLGQQQQQQEYQEQELHLGQQQQQQEYQEQELHLGQQQQQEYQEQELHLGQHQQQTSQEQKLHLGQQQQHQESQEQKLHLEQQQQEPQKQELHLGQQEAQEEELHLKQQQQECQKEEVHLEQQQQECQKEEVHLEQQQQECQKEEVHLEQQQQECQKEEVHLEQQQQECQKEEVHLEQQQQECQKEEVHLEQQQQETQELQQHQGAGILEQKLHQEKAQSEQQLKGQLDWEEKLLDQQLEQELAKRDEQLGKKEEQLLEPSEQQEGLLEQPTLVPAPSQLHENQAAQVPKGEVLLPIEQQRQQEVQWPVKHK.

3 disordered regions span residues 1-196 (MSQQ…HLKQ), 273-312 (KEEVHLEQQQQETQELQQHQGAGILEQKLHQEKAQSEQQL), and 333-381 (KRDE…KGEV). 3 stretches are compositionally biased toward low complexity: residues 78 to 159 (QQQQ…QQHQ), 169 to 186 (EQQQQEPQKQELHLGQQE), and 279 to 292 (EQQQQETQELQQHQ). The segment covering 333–344 (KRDEQLGKKEEQ) has biased composition (basic and acidic residues). The segment covering 346–358 (LEPSEQQEGLLEQ) has biased composition (low complexity).

The protein belongs to the involucrin family. As to quaternary structure, directly or indirectly cross-linked to cornifelin (CNFN). Substrate of transglutaminase. Specific glutamines or lysines are cross-linked to keratins, desmoplakin and to inter involucrin molecules. Keratinocytes of epidermis and other stratified squamous epithelia.

The protein resides in the cytoplasm. In terms of biological role, part of the insoluble cornified cell envelope (CE) of stratified squamous epithelia. The polypeptide is Involucrin (IVL) (Tupaia glis (Common tree shrew)).